The sequence spans 488 residues: Ribulose bisphosphate carboxylase large chain (488 aa).

Substrate contacts are provided by Asn-128 and Thr-178. Catalysis depends on Lys-180, which acts as the Proton acceptor. Lys-182 lines the substrate pocket. The Mg(2+) site is built by Lys-206, Asp-208, and Glu-209. At Lys-206 the chain carries N6-carboxylysine. Catalysis depends on His-298, which acts as the Proton acceptor. Substrate-binding residues include Arg-299, His-331, and Ser-383.

It belongs to the RuBisCO large chain family. Type I subfamily. As to quaternary structure, heterohexadecamer of 8 large chains and 8 small chains. Mg(2+) is required as a cofactor.

It carries out the reaction 2 (2R)-3-phosphoglycerate + 2 H(+) = D-ribulose 1,5-bisphosphate + CO2 + H2O. The enzyme catalyses D-ribulose 1,5-bisphosphate + O2 = 2-phosphoglycolate + (2R)-3-phosphoglycerate + 2 H(+). In terms of biological role, ruBisCO catalyzes two reactions: the carboxylation of D-ribulose 1,5-bisphosphate, the primary event in carbon dioxide fixation, as well as the oxidative fragmentation of the pentose substrate. Both reactions occur simultaneously and in competition at the same active site. The sequence is that of Ribulose bisphosphate carboxylase large chain from Xanthobacter flavus.